The following is a 688-amino-acid chain: Chaperone protein dnaK1 (688 aa).

Threonine 198 carries the post-translational modification Phosphothreonine; by autocatalysis. Over residues 630 to 661 (DLPRDSYRERDAYNNRDYGRDYGRDYGRDSRP) the composition is skewed to basic and acidic residues. Positions 630 to 688 (DLPRDSYRERDAYNNRDYGRDYGRDYGRDSRPSYDNSRPPRKSPRPSYQDNWDDDDDWL) are disordered.

The protein belongs to the heat shock protein 70 family.

In terms of biological role, acts as a chaperone. The polypeptide is Chaperone protein dnaK1 (dnaK1) (Nostoc sp. (strain PCC 7120 / SAG 25.82 / UTEX 2576)).